The primary structure comprises 476 residues: Serine protease HTRA1B (476 aa).

Residues 1–19 form the signal peptide; that stretch reads MRLLILCASIILVPLLCDA. The region spanning 25 to 109 is the IGFBP N-terminal domain; it reads YVIGCPERCD…RGKTGVCVCK (85 aa). Intrachain disulfides connect C29–C54, C33–C56, C38–C57, C45–C60, C68–C85, and C79–C106. Positions 94–153 constitute a Kazal-like domain; sequence TTTVRRRGKTGVCVCKSSEPVCGSDGVSYRNICELKRVSNRAQKLQQPPIIFIQRGACGK. The tract at residues 200 to 360 is serine protease; it reads GSGFVVSEDG…IPSDKIRQFL (161 aa). Residues H216, D246, and S324 each act as charge relay system in the active site. Positions 361 to 463 constitute a PDZ domain; sequence AESHDRQAKG…LRAVVRRGNE (103 aa).

This sequence belongs to the peptidase S1C family. As to quaternary structure, forms homotrimers. In the presence of substrate, may form higher-order multimers in a PDZ-independent manner.

The protein resides in the secreted. It localises to the cytoplasm. It is found in the cytosol. Functionally, serine protease with a variety of targets, including extracellular matrix proteins and proteoglycans. Through cleavage of proteoglycans, may release soluble FGF-glycosaminoglycan complexes that promote the range and intensity of FGF signals in the extracellular space. Regulates the availability of insulin-like growth factors (IGFs) by cleaving IGF-binding proteins. Inhibits signaling mediated by TGF-beta family members. Consequently, may regulate many physiological processes. Intracellularly, degrades TSC2, leading to the activation of TSC2 downstream targets. This is Serine protease HTRA1B (htra1b) from Danio rerio (Zebrafish).